The sequence spans 370 residues: 3-dehydroquinate synthase (370 aa).

NAD(+)-binding positions include 70–75 (DAEDGK), 104–108 (GAATD), 128–129 (TT), Lys141, Lys150, and 168–171 (TLET). Positions 183, 246, and 262 each coordinate Zn(2+).

The protein belongs to the sugar phosphate cyclases superfamily. Dehydroquinate synthase family. Co(2+) serves as cofactor. The cofactor is Zn(2+). Requires NAD(+) as cofactor.

The protein localises to the cytoplasm. It carries out the reaction 7-phospho-2-dehydro-3-deoxy-D-arabino-heptonate = 3-dehydroquinate + phosphate. The protein operates within metabolic intermediate biosynthesis; chorismate biosynthesis; chorismate from D-erythrose 4-phosphate and phosphoenolpyruvate: step 2/7. Functionally, catalyzes the conversion of 3-deoxy-D-arabino-heptulosonate 7-phosphate (DAHP) to dehydroquinate (DHQ). The chain is 3-dehydroquinate synthase from Rhodococcus opacus (strain B4).